The chain runs to 366 residues: tRNA N6-adenosine threonylcarbamoyltransferase (366 aa).

Fe cation contacts are provided by H119 and H123. Residues 142-146 (LVSGG), D175, G188, D192, and N281 each bind substrate. Fe cation is bound at residue D309.

This sequence belongs to the KAE1 / TsaD family. It depends on Fe(2+) as a cofactor.

It is found in the cytoplasm. It carries out the reaction L-threonylcarbamoyladenylate + adenosine(37) in tRNA = N(6)-L-threonylcarbamoyladenosine(37) in tRNA + AMP + H(+). Its function is as follows. Required for the formation of a threonylcarbamoyl group on adenosine at position 37 (t(6)A37) in tRNAs that read codons beginning with adenine. Is involved in the transfer of the threonylcarbamoyl moiety of threonylcarbamoyl-AMP (TC-AMP) to the N6 group of A37, together with TsaE and TsaB. TsaD likely plays a direct catalytic role in this reaction. In Synechococcus sp. (strain JA-3-3Ab) (Cyanobacteria bacterium Yellowstone A-Prime), this protein is tRNA N6-adenosine threonylcarbamoyltransferase.